The primary structure comprises 117 residues: MAIINRSKLTQTTMIKQILKRCSSLGKKQSSEYNDTHEHDGDSLPLDVPKGHFVVYVGGNRVRYVLPISFLTRPEFQLLLQQAEEEFGFDHNMGLTIPCEEVAFKSLITSMLQPTYI.

It belongs to the ARG7 family. In terms of tissue distribution, expressed in trichomes. Hardly observed in leaves.

Its subcellular location is the cell membrane. Its function is as follows. Provide a mechanistic link between auxin and plasma membrane H(+)-ATPases (PM H(+)-ATPases, e.g. AHA1 and AHA2), and triggers PM H(+)-ATPases activity by promoting phosphorylation of their C-terminal autoinhibitory domain as a result of PP2C-D subfamily of type 2C phosphatases inhibition, thus leading to the acidification of the apoplast and the facilitation of solutes and water uptake to drive cell expansion. Triggers plant growth probably by promoting cell elongation. Regulates branch angles and bending. In Arabidopsis thaliana (Mouse-ear cress), this protein is Protein SMALL AUXIN UP-REGULATED RNA 54.